The primary structure comprises 303 residues: Glycine--tRNA ligase alpha subunit (303 aa).

The protein belongs to the class-II aminoacyl-tRNA synthetase family. As to quaternary structure, tetramer of two alpha and two beta subunits.

It localises to the cytoplasm. It carries out the reaction tRNA(Gly) + glycine + ATP = glycyl-tRNA(Gly) + AMP + diphosphate. This is Glycine--tRNA ligase alpha subunit from Klebsiella pneumoniae (strain 342).